The primary structure comprises 74 residues: Defensin Lc-def (74 aa).

A signal peptide spans 1 to 27; sequence MEKKTVAALSFLFIVLFVAQEIAVTEA. 4 disulfides stabilise this stretch: Cys-30-Cys-74, Cys-41-Cys-62, Cys-47-Cys-68, and Cys-51-Cys-70.

It is found in the secreted. Its function is as follows. Has antifungal activity against the phytopathogenic fungus A.niger VKM F-2259, but not against A.alternata VKM F-3047. Does not inhibit trypsin or chymotrypsin. This Lens culinaris subsp. culinaris (Cultivated lentil) protein is Defensin Lc-def.